The sequence spans 372 residues: Cytochrome b (372 aa).

Transmembrane regions (helical) follow at residues 25–45 (FGSMLLTCSALQIMTGFFLSM), 69–90 (WMMQNLHAIGASMFFICVYIHV), 105–125 (WLSGTTLLIMLMATAFFGYVL), and 170–190 (FFALHFILPFGIISLSSLHIM). 2 residues coordinate heme b: histidine 75 and histidine 89. Heme b-binding residues include histidine 174 and histidine 188. A ubiquinone is bound at residue histidine 193. Helical transmembrane passes span 218 to 238 (YKDLFMISSMIMIMLLTISFI), 280 to 300 (LGGALALAMSITILLTVPFTH), 312 to 332 (FMQLMFWTLVTTFMIITWTAT), and 339 to 358 (YTMISQVTSSLYFMFFMSNP).

The protein belongs to the cytochrome b family. The cytochrome bc1 complex contains 3 respiratory subunits (MT-CYB, CYC1 and UQCRFS1), 2 core proteins (UQCRC1 and UQCRC2) and probably 6 low-molecular weight proteins. Heme b serves as cofactor.

The protein resides in the mitochondrion inner membrane. Its function is as follows. Component of the ubiquinol-cytochrome c reductase complex (complex III or cytochrome b-c1 complex) that is part of the mitochondrial respiratory chain. The b-c1 complex mediates electron transfer from ubiquinol to cytochrome c. Contributes to the generation of a proton gradient across the mitochondrial membrane that is then used for ATP synthesis. In Acrantophis dumerili (Dumeril's ground boa), this protein is Cytochrome b (MT-CYB).